The following is a 120-amino-acid chain: MQNISPKVQNQINMLQQMQQQMQTILSQKSQYELAAQEARRAVEELKETDDSAAVYMNVGTVVMQKPKSEVISKVTEKIETLEIRIRSIEKQEKMLQEKFEKLQSQVRSEIEGRKTPDAN.

This sequence belongs to the prefoldin subunit beta family. As to quaternary structure, heterohexamer of two alpha and four beta subunits.

Its subcellular location is the cytoplasm. Its function is as follows. Molecular chaperone capable of stabilizing a range of proteins. Seems to fulfill an ATP-independent, HSP70-like function in archaeal de novo protein folding. This Methanospirillum hungatei JF-1 (strain ATCC 27890 / DSM 864 / NBRC 100397 / JF-1) protein is Prefoldin subunit beta.